A 223-amino-acid chain; its full sequence is ATP phosphoribosyltransferase (223 aa).

The protein belongs to the ATP phosphoribosyltransferase family. Short subfamily. Heteromultimer composed of HisG and HisZ subunits.

The protein resides in the cytoplasm. It catalyses the reaction 1-(5-phospho-beta-D-ribosyl)-ATP + diphosphate = 5-phospho-alpha-D-ribose 1-diphosphate + ATP. The protein operates within amino-acid biosynthesis; L-histidine biosynthesis; L-histidine from 5-phospho-alpha-D-ribose 1-diphosphate: step 1/9. In terms of biological role, catalyzes the condensation of ATP and 5-phosphoribose 1-diphosphate to form N'-(5'-phosphoribosyl)-ATP (PR-ATP). Has a crucial role in the pathway because the rate of histidine biosynthesis seems to be controlled primarily by regulation of HisG enzymatic activity. The chain is ATP phosphoribosyltransferase from Sphingopyxis alaskensis (strain DSM 13593 / LMG 18877 / RB2256) (Sphingomonas alaskensis).